The primary structure comprises 834 residues: Leucine--tRNA ligase (834 aa).

The short motif at 36 to 46 is the 'HIGH' region element; sequence PYPSGKIHVGH. Residues 602 to 606 carry the 'KMSKS' region motif; that stretch reads KMSKS. Lys-605 is a binding site for ATP.

Belongs to the class-I aminoacyl-tRNA synthetase family.

The protein resides in the cytoplasm. The catalysed reaction is tRNA(Leu) + L-leucine + ATP = L-leucyl-tRNA(Leu) + AMP + diphosphate. The chain is Leucine--tRNA ligase from Rickettsia canadensis (strain McKiel).